The primary structure comprises 672 residues: tRNA(Met) cytidine acetyltransferase TmcA (672 aa).

ATP-binding positions include Gln-180, 202–211 (GRGKSALAGQ), and Arg-319. Positions 349–531 (IEISAFYQQA…SGCYTAMALL (183 aa)) constitute an N-acetyltransferase domain. Acetyl-CoA is bound by residues 461 to 463 (IAV), 468 to 474 (QREGIGQ), and Arg-506.

It belongs to the RNA cytidine acetyltransferase family. TmcA subfamily.

It localises to the cytoplasm. The enzyme catalyses cytidine(34) in elongator tRNA(Met) + acetyl-CoA + ATP + H2O = N(4)-acetylcytidine(34) in elongator tRNA(Met) + ADP + phosphate + CoA + H(+). Catalyzes the formation of N(4)-acetylcytidine (ac(4)C) at the wobble position of tRNA(Met), by using acetyl-CoA as an acetyl donor and ATP (or GTP). The chain is tRNA(Met) cytidine acetyltransferase TmcA from Salmonella typhimurium (strain LT2 / SGSC1412 / ATCC 700720).